Consider the following 123-residue polypeptide: Large ribosomal subunit protein uL14 (123 aa).

The protein belongs to the universal ribosomal protein uL14 family. Part of the 50S ribosomal subunit. Forms a cluster with proteins L3 and L19. In the 70S ribosome, L14 and L19 interact and together make contacts with the 16S rRNA in bridges B5 and B8.

Its function is as follows. Binds to 23S rRNA. Forms part of two intersubunit bridges in the 70S ribosome. In Photorhabdus laumondii subsp. laumondii (strain DSM 15139 / CIP 105565 / TT01) (Photorhabdus luminescens subsp. laumondii), this protein is Large ribosomal subunit protein uL14.